A 166-amino-acid polypeptide reads, in one-letter code: MIKAIFPGSFDPITNGHVEVIEGASHMFEKLYVVIMTNTSKKYLFTEKERLELARKVFENNEKVEVIARPAELTVEVAHELGAGAIVRGLRNTADFNYERDIAGINKTLDPDLNTVLLFTRPEDSFISSSMIKETVFFGGDVSTLVPKPVAAALEEKLRNRNNEKK.

Residue serine 9 coordinates substrate. ATP contacts are provided by residues 9-10 (SF) and histidine 17. Substrate-binding residues include lysine 41, threonine 74, and arginine 88. ATP-binding positions include 89–91 (GLR), glutamate 99, and 124–130 (DSFISSS).

The protein belongs to the bacterial CoaD family. Homohexamer. Mg(2+) is required as a cofactor.

The protein resides in the cytoplasm. The catalysed reaction is (R)-4'-phosphopantetheine + ATP + H(+) = 3'-dephospho-CoA + diphosphate. Its pathway is cofactor biosynthesis; coenzyme A biosynthesis; CoA from (R)-pantothenate: step 4/5. Functionally, reversibly transfers an adenylyl group from ATP to 4'-phosphopantetheine, yielding dephospho-CoA (dPCoA) and pyrophosphate. This is Phosphopantetheine adenylyltransferase from Lactobacillus johnsonii (strain CNCM I-12250 / La1 / NCC 533).